The primary structure comprises 441 residues: Ribosomal protein uS12 methylthiotransferase RimO (441 aa).

Residues proline 8 to proline 118 form the MTTase N-terminal domain. The [4Fe-4S] cluster site is built by cysteine 17, cysteine 53, cysteine 82, cysteine 150, cysteine 154, and cysteine 157. The 238-residue stretch at leucine 136–glutamate 373 folds into the Radical SAM core domain. The TRAM domain maps to glutamine 376–valine 441.

The protein belongs to the methylthiotransferase family. RimO subfamily. Requires [4Fe-4S] cluster as cofactor.

It is found in the cytoplasm. The catalysed reaction is L-aspartate(89)-[ribosomal protein uS12]-hydrogen + (sulfur carrier)-SH + AH2 + 2 S-adenosyl-L-methionine = 3-methylsulfanyl-L-aspartate(89)-[ribosomal protein uS12]-hydrogen + (sulfur carrier)-H + 5'-deoxyadenosine + L-methionine + A + S-adenosyl-L-homocysteine + 2 H(+). Its function is as follows. Catalyzes the methylthiolation of an aspartic acid residue of ribosomal protein uS12. This is Ribosomal protein uS12 methylthiotransferase RimO from Cronobacter sakazakii (strain ATCC BAA-894) (Enterobacter sakazakii).